We begin with the raw amino-acid sequence, 1071 residues long: DNA-directed RNA polymerase subunit beta (1071 aa).

This sequence belongs to the RNA polymerase beta chain family. In plastids the minimal PEP RNA polymerase catalytic core is composed of four subunits: alpha, beta, beta', and beta''. When a (nuclear-encoded) sigma factor is associated with the core the holoenzyme is formed, which can initiate transcription.

The protein resides in the plastid. Its subcellular location is the chloroplast. It catalyses the reaction RNA(n) + a ribonucleoside 5'-triphosphate = RNA(n+1) + diphosphate. Functionally, DNA-dependent RNA polymerase catalyzes the transcription of DNA into RNA using the four ribonucleoside triphosphates as substrates. The polypeptide is DNA-directed RNA polymerase subunit beta (Nymphaea alba (White water-lily)).